A 247-amino-acid chain; its full sequence is NAD(P)H-quinone oxidoreductase subunit K (247 aa).

Positions 63, 64, 128, and 159 each coordinate [4Fe-4S] cluster.

This sequence belongs to the complex I 20 kDa subunit family. NDH-1 can be composed of about 15 different subunits; different subcomplexes with different compositions have been identified which probably have different functions. [4Fe-4S] cluster serves as cofactor.

It localises to the cellular thylakoid membrane. The catalysed reaction is a plastoquinone + NADH + (n+1) H(+)(in) = a plastoquinol + NAD(+) + n H(+)(out). It carries out the reaction a plastoquinone + NADPH + (n+1) H(+)(in) = a plastoquinol + NADP(+) + n H(+)(out). Functionally, NDH-1 shuttles electrons from an unknown electron donor, via FMN and iron-sulfur (Fe-S) centers, to quinones in the respiratory and/or the photosynthetic chain. The immediate electron acceptor for the enzyme in this species is believed to be plastoquinone. Couples the redox reaction to proton translocation, and thus conserves the redox energy in a proton gradient. Cyanobacterial NDH-1 also plays a role in inorganic carbon-concentration. This Gloeothece citriformis (strain PCC 7424) (Cyanothece sp. (strain PCC 7424)) protein is NAD(P)H-quinone oxidoreductase subunit K.